The following is a 151-amino-acid chain: Large ribosomal subunit protein uL13 (151 aa).

Positions 129 to 151 (PTHPHDAQKPKELNINTIPGAES) are disordered. A compositionally biased stretch (basic and acidic residues) spans 131 to 140 (HPHDAQKPKE).

This sequence belongs to the universal ribosomal protein uL13 family. Part of the 50S ribosomal subunit.

This protein is one of the early assembly proteins of the 50S ribosomal subunit, although it is not seen to bind rRNA by itself. It is important during the early stages of 50S assembly. In Trichormus variabilis (strain ATCC 29413 / PCC 7937) (Anabaena variabilis), this protein is Large ribosomal subunit protein uL13.